The chain runs to 708 residues: MSITKLAPAAFDLHQPFPPSGDQPAAIAKLIEGIQSGKTAQTLLGATGTGKTYTMANVIASVQRPALILSHNKTLAAQLYGEFKEFFPNNAVHYFVSYYDYYQPEAYIPQRDVYIEKDSSINEEIDRLRLATTSSLVSRRDVVIVASVSSIYGLGSPDDYRQLVVDLHQGEQTRRDHLLLKFVDLQYQRNDIQFERGKFRVRGDSIELWPSYEEFAYRIEMWGDEIEKISLIKPTSGETIKTVEHLYIYPCKHFVMPEDRIQRAIRLLREELTQQLEIFQSQGKLLEAQRLSARTKFDLEMLAEVGHCPGIENYSRPLSGKEPGATPDTLYDFFPKDFITFVDESHVTVPQVRAMYAGDRSRKITLVEHGFRLPCALDNRPLKFDEWEERTGQICFVSATPSDYELERTGGEVVEQIIRPTGLLDPEVEIVSARGQVTHLLEQVRIRAERDERVLVTALTKRLAEDLATYFQEQGVKCRWLHSELNAFERVDLLQELRAGQFDCLVGVNLLREGLDLPEVSLVAILDADKEGFLRSETSLIQTIGRAARNANSRVILYADKVTDSMQMAIDETERRRVIQMEYNAKHGIVPKTVRKSIRKGIDTEAANHKESTRKAQDSGEAIYITIEYVDKLEQEMLAAAEDLEFERAARLRDRVLQLKEHIGKPLSEVEIVDEKSAGKSGGRGRGRRGAKKKGASKGTKIPRPKRG.

The region spanning 32 to 419 (EGIQSGKTAQ…GGEVVEQIIR (388 aa)) is the Helicase ATP-binding domain. An ATP-binding site is contributed by 45–52 (GATGTGKT). The Beta-hairpin signature appears at 98–121 (YYDYYQPEAYIPQRDVYIEKDSSI). One can recognise a Helicase C-terminal domain in the interval 436–598 (QVTHLLEQVR…IVPKTVRKSI (163 aa)). The region spanning 627–662 (IEYVDKLEQEMLAAAEDLEFERAARLRDRVLQLKEH) is the UVR domain. The disordered stretch occupies residues 668–708 (SEVEIVDEKSAGKSGGRGRGRRGAKKKGASKGTKIPRPKRG). A compositionally biased stretch (basic residues) spans 683–708 (GRGRGRRGAKKKGASKGTKIPRPKRG).

The protein belongs to the UvrB family. Forms a heterotetramer with UvrA during the search for lesions. Interacts with UvrC in an incision complex.

It is found in the cytoplasm. Its function is as follows. The UvrABC repair system catalyzes the recognition and processing of DNA lesions. A damage recognition complex composed of 2 UvrA and 2 UvrB subunits scans DNA for abnormalities. Upon binding of the UvrA(2)B(2) complex to a putative damaged site, the DNA wraps around one UvrB monomer. DNA wrap is dependent on ATP binding by UvrB and probably causes local melting of the DNA helix, facilitating insertion of UvrB beta-hairpin between the DNA strands. Then UvrB probes one DNA strand for the presence of a lesion. If a lesion is found the UvrA subunits dissociate and the UvrB-DNA preincision complex is formed. This complex is subsequently bound by UvrC and the second UvrB is released. If no lesion is found, the DNA wraps around the other UvrB subunit that will check the other stand for damage. In Rhodopirellula baltica (strain DSM 10527 / NCIMB 13988 / SH1), this protein is UvrABC system protein B.